We begin with the raw amino-acid sequence, 227 residues long: Phosphoglycolate phosphatase (227 aa).

Catalysis depends on Asp-13, which acts as the Nucleophile. The Mg(2+) site is built by Asp-13, Asp-15, and Asp-176.

This sequence belongs to the HAD-like hydrolase superfamily. CbbY/CbbZ/Gph/YieH family. Mg(2+) is required as a cofactor.

It carries out the reaction 2-phosphoglycolate + H2O = glycolate + phosphate. It functions in the pathway organic acid metabolism; glycolate biosynthesis; glycolate from 2-phosphoglycolate: step 1/1. In terms of biological role, specifically catalyzes the dephosphorylation of 2-phosphoglycolate. Is involved in the dissimilation of the intracellular 2-phosphoglycolate formed during the DNA repair of 3'-phosphoglycolate ends, a major class of DNA lesions induced by oxidative stress. This is Phosphoglycolate phosphatase from Nitrosospira multiformis (strain ATCC 25196 / NCIMB 11849 / C 71).